We begin with the raw amino-acid sequence, 816 residues long: Lon protease (816 aa).

Residues 40–244 (VPLIAVPSHP…KVLELLYEEL (205 aa)) form the Lon N-terminal domain. 398-405 (GPPGVGKT) is an ATP binding site. Positions 636 to 816 (AMSPGMVMGL…SMKEVIKLLF (181 aa)) constitute a Lon proteolytic domain. Active-site residues include serine 724 and lysine 767.

It belongs to the peptidase S16 family. In terms of assembly, homohexamer. Organized in a ring with a central cavity.

The protein localises to the cytoplasm. It carries out the reaction Hydrolysis of proteins in presence of ATP.. In terms of biological role, ATP-dependent serine protease that mediates the selective degradation of mutant and abnormal proteins as well as certain short-lived regulatory proteins. Required for cellular homeostasis and for survival from DNA damage and developmental changes induced by stress. Degrades polypeptides processively to yield small peptide fragments that are 5 to 10 amino acids long. Binds to DNA in a double-stranded, site-specific manner. This Borrelia duttonii (strain Ly) protein is Lon protease.